A 424-amino-acid polypeptide reads, in one-letter code: F-box protein At2g38590 (424 aa).

An F-box domain is found at 2–47 (TTMISNLPRVLIEEIFFRVPLKSLRAVRLTCKSWNTLSKSRSFRKL).

The sequence is that of F-box protein At2g38590 from Arabidopsis thaliana (Mouse-ear cress).